The sequence spans 160 residues: Protransforming growth factor alpha (160 aa).

An N-terminal signal peptide occupies residues 1–23 (MVPSAGQFALFALGILLAVCQAL). Positions 24-39 (ENSTSALSADPPIAAA) are cleaved as a propeptide — removed in mature form. The Extracellular segment spans residues 24–98 (ENSTSALSAD…AVVAASQKKQ (75 aa)). A glycan (N-linked (GlcNAc...) asparagine) is linked at N25. The EGF-like domain maps to 43–83 (HFNDCPDSHSQFCFHGTCRFLVQEDKPACVCHSGYVGARCE). Disulfide bonds link C47-C60, C55-C71, and C73-C82. The propeptide at 90–160 (VVAASQKKQA…TACCHSETVV (71 aa)) is removed in mature form. The chain crosses the membrane as a helical span at residues 99–124 (AITALVVVSIVALAVLIITCVLIHCC). Topologically, residues 125–160 (QVRKHCEWCRALICRHEKPSALLKGRTACCHSETVV) are cytoplasmic. 2 S-palmitoyl cysteine lipidation sites follow: C153 and C154.

Interacts with the PDZ domains of MAGI3, SDCBP and SNTA1. The interaction with SDCBP, is required for the targeting to the cell surface. In the endoplasmic reticulum, in its immature form (i.e. with a prosegment and lacking full N-glycosylation), interacts with CNIH. In the Golgi apparatus, may form a complex with CNIH and GORASP2. Interacts (via cytoplasmic C-terminal domain) with NKD2.

Its subcellular location is the secreted. It is found in the extracellular space. It localises to the cell membrane. In terms of biological role, TGF alpha is a mitogenic polypeptide that is able to bind to the EGF receptor/EGFR and to act synergistically with TGF beta to promote anchorage-independent cell proliferation in soft agar. The protein is Protransforming growth factor alpha (TGFA) of Sus scrofa (Pig).